We begin with the raw amino-acid sequence, 485 residues long: tRNA sulfurtransferase (485 aa).

Positions 63-167 (ERYAERLACI…NEHLYLVEKR (105 aa)) constitute a THUMP domain. Residues 185–186 (LI), Lys-267, Gly-289, and Gln-298 each bind ATP. Cys-346 and Cys-458 are oxidised to a cystine. Positions 406–484 (VSGGEVVVDI…GYHNVKVYRP (79 aa)) constitute a Rhodanese domain. Residue Cys-458 is the Cysteine persulfide intermediate of the active site.

This sequence belongs to the ThiI family.

It localises to the cytoplasm. It carries out the reaction [ThiI sulfur-carrier protein]-S-sulfanyl-L-cysteine + a uridine in tRNA + 2 reduced [2Fe-2S]-[ferredoxin] + ATP + H(+) = [ThiI sulfur-carrier protein]-L-cysteine + a 4-thiouridine in tRNA + 2 oxidized [2Fe-2S]-[ferredoxin] + AMP + diphosphate. The catalysed reaction is [ThiS sulfur-carrier protein]-C-terminal Gly-Gly-AMP + S-sulfanyl-L-cysteinyl-[cysteine desulfurase] + AH2 = [ThiS sulfur-carrier protein]-C-terminal-Gly-aminoethanethioate + L-cysteinyl-[cysteine desulfurase] + A + AMP + 2 H(+). It functions in the pathway cofactor biosynthesis; thiamine diphosphate biosynthesis. Its function is as follows. Catalyzes the ATP-dependent transfer of a sulfur to tRNA to produce 4-thiouridine in position 8 of tRNAs, which functions as a near-UV photosensor. Also catalyzes the transfer of sulfur to the sulfur carrier protein ThiS, forming ThiS-thiocarboxylate. This is a step in the synthesis of thiazole, in the thiamine biosynthesis pathway. The sulfur is donated as persulfide by IscS. The protein is tRNA sulfurtransferase of Shewanella loihica (strain ATCC BAA-1088 / PV-4).